Consider the following 990-residue polypeptide: MRSTSKAIPFSFHTSLIVQCLRPLRFTSAASPSSSSSSSSQWFGFLRNAITSSDLMLGKCTHARILTFEENPERFLINNLISMYSKCGSLTYARRVFDKMPDRDLVSWNSILAAYAQSSECVVENIQQAFLLFRILRQDVVYTSRMTLSPMLKLCLHSGYVWASESFHGYACKIGLDGDEFVAGALVNIYLKFGKVKEGKVLFEEMPYRDVVLWNLMLKAYLEMGFKEEAIDLSSAFHSSGLNPNEITLRLLARISGDDSDAGQVKSFANGNDASSVSEIIFRNKGLSEYLHSGQYSALLKCFADMVESDVECDQVTFILMLATAVKVDSLALGQQVHCMALKLGLDLMLTVSNSLINMYCKLRKFGFARTVFDNMSERDLISWNSVIAGIAQNGLEVEAVCLFMQLLRCGLKPDQYTMTSVLKAASSLPEGLSLSKQVHVHAIKINNVSDSFVSTALIDAYSRNRCMKEAEILFERHNFDLVAWNAMMAGYTQSHDGHKTLKLFALMHKQGERSDDFTLATVFKTCGFLFAINQGKQVHAYAIKSGYDLDLWVSSGILDMYVKCGDMSAAQFAFDSIPVPDDVAWTTMISGCIENGEEERAFHVFSQMRLMGVLPDEFTIATLAKASSCLTALEQGRQIHANALKLNCTNDPFVGTSLVDMYAKCGSIDDAYCLFKRIEMMNITAWNAMLVGLAQHGEGKETLQLFKQMKSLGIKPDKVTFIGVLSACSHSGLVSEAYKHMRSMHGDYGIKPEIEHYSCLADALGRAGLVKQAENLIESMSMEASASMYRTLLAACRVQGDTETGKRVATKLLELEPLDSSAYVLLSNMYAAASKWDEMKLARTMMKGHKVKKDPGFSWIEVKNKIHIFVVDDRSNRQTELIYRKVKDMIRDIKQEGYVPETDFTLVDVEEEEKERALYYHSEKLAVAFGLLSTPPSTPIRVIKNLRVCGDCHNAMKYIAKVYNREIVLRDANRFHRFKDGICSCGDYW.

PPR repeat units follow at residues E73–S107, N109–D139, S144–G178, D179–R209, D210–P244, E279–C313, D314–L348, M349–R379, D380–P414, D415–S450, D451–R477, D481–S515, D516–L550, D551–P581, D582–P616, D617–N651, D652–M682, N683–P717, D718–P753, and E754–S788. A type E motif region spans residues M789 to K864. A type E(+) motif region spans residues N865 to K895. Residues Q896–W990 form a type DYW motif region.

It belongs to the PPR family. PCMP-H subfamily.

The protein is Pentatricopeptide repeat-containing protein At4g33170 (PCMP-H53) of Arabidopsis thaliana (Mouse-ear cress).